Reading from the N-terminus, the 70-residue chain is Cecropin-P1 (70 aa).

A signal peptide spans 1-13; sequence MFLIYLFVQTAES. Positions 45–70 are cleaved as a propeptide — removed in mature form; it reads RRRFVAEQDAIHSRVSREVPTLSDSV.

Expressed in the body wall, intestine, uterus and ovary.

It localises to the secreted. Its function is as follows. Has antibacterial activity against several Gram-positive and Gram-negative bacteria. Is weakly active against yeasts. Acts by a nonpore mechanism. The protein is Cecropin-P1 (ASCEC-1) of Ascaris suum (Pig roundworm).